A 171-amino-acid chain; its full sequence is Phosphopantetheine adenylyltransferase (171 aa).

Thr9 contributes to the substrate binding site. Residues 9–10 (TF) and His17 each bind ATP. Substrate contacts are provided by Lys41, Leu78, and Arg92. ATP is bound by residues 93–95 (GLR), Glu103, and 128–134 (HQAIASK).

It belongs to the bacterial CoaD family. Homohexamer. Mg(2+) serves as cofactor.

Its subcellular location is the cytoplasm. It catalyses the reaction (R)-4'-phosphopantetheine + ATP + H(+) = 3'-dephospho-CoA + diphosphate. Its pathway is cofactor biosynthesis; coenzyme A biosynthesis; CoA from (R)-pantothenate: step 4/5. Reversibly transfers an adenylyl group from ATP to 4'-phosphopantetheine, yielding dephospho-CoA (dPCoA) and pyrophosphate. This chain is Phosphopantetheine adenylyltransferase, found in Dinoroseobacter shibae (strain DSM 16493 / NCIMB 14021 / DFL 12).